Consider the following 463-residue polypeptide: Type I restriction enzyme StySPI specificity subunit (463 aa).

This sequence belongs to the type-I restriction system S methylase family. The type I restriction/modification system is composed of three polypeptides R, M and S; the restriction enzyme has stoichiometry R(2)M(2)S(1) while the methyltransferase is M(2)S(1).

Its function is as follows. The specificity (S) subunit of a type I restriction enzyme; this subunit dictates DNA sequence specificity. The M and S subunits together form a methyltransferase (MTase) that methylates A-2 on the top strand and A-3 on the bottom strand of the sequence 5'-AACN(6)GTRC-3'. In the presence of the R subunit the complex can also act as an endonuclease, binding to the same target sequence but cutting the DNA some distance from this site. Whether the DNA is cut or modified depends on the methylation state of the target sequence. When the target site is unmodified, the DNA is cut. When the target site is hemimethylated, the complex acts as a maintenance MTase modifying the DNA so that both strands become methylated. After locating a non-methylated recognition site, the enzyme complex serves as a molecular motor that translocates DNA in an ATP-dependent manner until a collision occurs that triggers cleavage. This Salmonella potsdam protein is Type I restriction enzyme StySPI specificity subunit.